The primary structure comprises 677 residues: MAEVVAEVAEVAEMPTQMSPRVMEMSAPILGEKMELSTELTEMTPGEAVASSLFFQFMCSECGNLYNTLEEVLSHQEQHVPTVTEEEALTTQDTGLEPELVPGTEEGPFQCGECSQLILSPRELLAHQDAHLRESASQIQYQCGDCQELFPSPELWVAHRKAQHLSTAAAKPPVPPPLPPVTPPPPPPAPLEVKMEPYECPECSTLCTTPEEFLEHQGTHFDSLEKEEHNGLEEEEEDDEDDNEETEEEEEAAAEVGDDAKGGDKSAAGQAQGSGDGPPHCTSAGTRRRHRRASHGPASAAHPFYCSQCQRSFSSANRLLAHGRAHVGGTHECTTCSKVFKKAASLEQHLRLHRGEARYLCVDCGRGFGTELTLVAHRRAHTANPLHRCRCGKTFSNMTKFLYHRRTHAGKSGAPPSAAPPTVASAVASLAPAEPTPPPPAPPTPPAQLPCPQCPKSFASASRLSRHRRAVHGPPERRHRCGVCGKGFKKLVHVRNHLRTHTGERPFQCHACGKTFASLANLSRHQLTHTGVRPYQCLDCGKRFTQSSNLQQHRRLHLRPVAFARAPRLPITGLYNKSPYYCGTCGRWFRAMAGLRLHQRVHAQARTLTLQPPRSPPPAPPPPPEPQQTIMCTELGETIAIIETSQPLALADTLQLCQAALGASEASGLLQLDTAFM.

3 C2H2-type zinc fingers span residues 57 to 79 (FMCSECGNLYNTLEEVLSHQEQH), 109 to 131 (FQCGECSQLILSPRELLAHQDAH), and 141 to 164 (YQCGDCQELFPSPELWVAHRKAQH). The segment at 167 to 190 (TAAAKPPVPPPLPPVTPPPPPPAP) is disordered. The segment covering 172-190 (PPVPPPLPPVTPPPPPPAP) has biased composition (pro residues). A C2H2-type 4 zinc finger spans residues 198-220 (YECPECSTLCTTPEEFLEHQGTH). Basic and acidic residues predominate over residues 223–232 (SLEKEEHNGL). Positions 223 to 300 (SLEKEEHNGL…RRASHGPASA (78 aa)) are disordered. Positions 233 to 257 (EEEEEDDEDDNEETEEEEEAAAEVG) are enriched in acidic residues. 4 C2H2-type zinc fingers span residues 304–326 (FYCSQCQRSFSSANRLLAHGRAH), 331–353 (HECTTCSKVFKKAASLEQHLRLH), 359–381 (YLCVDCGRGFGTELTLVAHRRAH), and 387–408 (HRCRCGKTFSNMTKFLYHRRTH). Positions 408–449 (HAGKSGAPPSAAPPTVASAVASLAPAEPTPPPPAPPTPPAQL) are disordered. Positions 410 to 433 (GKSGAPPSAAPPTVASAVASLAPA) are enriched in low complexity. The span at 434–449 (EPTPPPPAPPTPPAQL) shows a compositional bias: pro residues. 5 consecutive C2H2-type zinc fingers follow at residues 449–472 (LPCPQCPKSFASASRLSRHRRAVH), 479–501 (HRCGVCGKGFKKLVHVRNHLRTH), 507–529 (FQCHACGKTFASLANLSRHQLTH), 535–557 (YQCLDCGKRFTQSSNLQQHRRLH), and 580–602 (YYCGTCGRWFRAMAGLRLHQRVH). Residues 608-627 (LTLQPPRSPPPAPPPPPEPQ) are disordered. Over residues 613–626 (PRSPPPAPPPPPEP) the composition is skewed to pro residues.

The protein belongs to the krueppel C2H2-type zinc-finger protein family.

The protein resides in the nucleus. In terms of biological role, may be involved in transcriptional regulation. The sequence is that of Zinc finger protein 526 (ZNF526) from Bos taurus (Bovine).